The following is a 549-amino-acid chain: Glucose-6-phosphate isomerase (549 aa).

Residue glutamate 355 is the Proton donor of the active site. Active-site residues include histidine 386 and lysine 514.

Belongs to the GPI family.

It is found in the cytoplasm. The enzyme catalyses alpha-D-glucose 6-phosphate = beta-D-fructose 6-phosphate. Its pathway is carbohydrate biosynthesis; gluconeogenesis. It functions in the pathway carbohydrate degradation; glycolysis; D-glyceraldehyde 3-phosphate and glycerone phosphate from D-glucose: step 2/4. Catalyzes the reversible isomerization of glucose-6-phosphate to fructose-6-phosphate. The sequence is that of Glucose-6-phosphate isomerase from Buchnera aphidicola subsp. Acyrthosiphon pisum (strain 5A).